A 363-amino-acid polypeptide reads, in one-letter code: Alanine racemase (363 aa).

Lys39 functions as the Proton acceptor; specific for D-alanine in the catalytic mechanism. Lys39 is modified (N6-(pyridoxal phosphate)lysine). Arg134 provides a ligand contact to substrate. Tyr251 functions as the Proton acceptor; specific for L-alanine in the catalytic mechanism. Residue Met299 participates in substrate binding.

The protein belongs to the alanine racemase family. It depends on pyridoxal 5'-phosphate as a cofactor.

The enzyme catalyses L-alanine = D-alanine. Its pathway is amino-acid biosynthesis; D-alanine biosynthesis; D-alanine from L-alanine: step 1/1. Catalyzes the interconversion of L-alanine and D-alanine. May also act on other amino acids. This is Alanine racemase (alr) from Thermodesulfovibrio yellowstonii (strain ATCC 51303 / DSM 11347 / YP87).